The sequence spans 516 residues: Probable inorganic phosphate transporter 1-6 (516 aa).

Ala-2 is modified (N-acetylalanine). Residues 2–25 (ANEEQGSILKALDVAKTQWYHVTA) are Cytoplasmic-facing. The chain crosses the membrane as a helical span at residues 26-46 (VVVSGMGFFTDSYDLFVISLI). The Extracellular portion of the chain corresponds to 47–71 (TKLLGRIYYQVPGSSSPGSLPDGIS). The helical transmembrane segment at 72–92 (AAVSGVAFAGTFIGQIFFGCL) threads the bilayer. Residues 93–100 (GDKLGRKR) are Cytoplasmic-facing. A helical transmembrane segment spans residues 101-121 (VYGLTLLIMTICSICSGLSLG). Residues 122 to 132 (RDPKTVMVTLC) lie on the Extracellular side of the membrane. Residues 133–153 (FFRFWLGFGIGGDYPLSATIM) form a helical membrane-spanning segment. Residues 154–162 (SEYSNKRTR) are Cytoplasmic-facing. Residues 163-183 (GAFIAAVFGMQGIGILAAGAV) form a helical membrane-spanning segment. Residues 184–212 (SLLVSAVFESKFPSRAYILDGAASTVPQA) lie on the Extracellular side of the membrane. A helical transmembrane segment spans residues 213–233 (DYVWRIILMVGALPALLTYYW). Residues 234-293 (RMKMPETARYTALVSKNAEQAALDMTKVLNVDIEASAAKNDQARVSSDEFGLFSMKFLRR) lie on the Cytoplasmic side of the membrane. Residues 294–314 (HGLHLLGTASTWFLLDIAFYS) traverse the membrane as a helical segment. The Extracellular portion of the chain corresponds to 315–349 (QNLFQKDIFTTIGWLPSAKTMNAIQELYMIAKAQT). A helical transmembrane segment spans residues 350–370 (IIACCSTVPGYFFTVGFIDYM). Residues 371–374 (GRKK) are Cytoplasmic-facing. Residues 375 to 395 (IQIMGFAMMTIFMLSLAIPYH) form a helical membrane-spanning segment. At 396-403 (HWTLPANR) the chain is on the extracellular side. Residues 404 to 424 (IGFVVLYSFTFFFSNFGPNAT) traverse the membrane as a helical segment. The Cytoplasmic segment spans residues 425–442 (TFIVPAEIFPARIRSTCH). The helical transmembrane segment at 443 to 463 (GISAASGKAGAMVGSFGFSAL) threads the bilayer. The Extracellular segment spans residues 464 to 471 (VKALGMSN). The helical transmembrane segment at 472-492 (TLYIMAGINLLGLLLTFTIPE) threads the bilayer. Residues 493 to 516 (TNGKSLEELSGETEPEKIKEKIVV) lie on the Cytoplasmic side of the membrane.

Belongs to the major facilitator superfamily. Phosphate:H(+) symporter (TC 2.A.1.9) family. Expressed in anthers, tapetumand mature pollen and, to a lower extent, in hydathodes and vascular tissues of cotyledons of flowering plants.

Its subcellular location is the membrane. Functionally, high-affinity transporter for external inorganic phosphate. In Arabidopsis thaliana (Mouse-ear cress), this protein is Probable inorganic phosphate transporter 1-6 (PHT1-6).